A 779-amino-acid chain; its full sequence is Potassium/sodium hyperpolarization-activated cyclic nucleotide-gated channel 3 (779 aa).

A disordered region spans residues 1–47 (MEEEARPAAGAGEAATPARETPPAAPAQARAASGGVPESAPEPKRRQ). The Cytoplasmic portion of the chain corresponds to 1 to 96 (MEEEARPAAG…PYSDFRFYWD (96 aa)). Over residues 7 to 32 (PAAGAGEAATPARETPPAAPAQARAA) the composition is skewed to low complexity. Positions 45-90 (RRQLGTLLQPTVNKFSLRVFGSHKAVEIEQERVKSAGAWIIHPYSD) are involved in subunit assembly. The helical transmembrane segment at 97–117 (LIMLLLMVGNLIVLPVGITFF) threads the bilayer. Residues 118–123 (KEENSP) are Extracellular-facing. A helical membrane pass occupies residues 124 to 144 (PWIVFNVLSDTFFLLDLVLNF). Topologically, residues 145–170 (RTGIVVEEGAEILLAPRAIRTRYLRT) are cytoplasmic. A helical transmembrane segment spans residues 171–191 (WFLVDLISSIPVDYIFLVVEL). Over 192 to 200 (EPRLDAEVY) the chain is Extracellular. The helical; Voltage-sensor transmembrane segment at 201 to 221 (KTARALRIVRFTKILSLLRLL) threads the bilayer. The Cytoplasmic portion of the chain corresponds to 222–252 (RLSRLIRYIHQWEEIFHMTYDLASAVVRIFN). A helical membrane pass occupies residues 253 to 273 (LIGMMLLLCHWDGCLQFLVPM). Residues 274 to 296 (LQDFPSDCWVSMNRMVNHSWGRQ) lie on the Extracellular side of the membrane. A glycan (N-linked (GlcNAc...) asparagine) is linked at asparagine 290. Residues 297–318 (YSHALFKAMSHMLCIGYGQQAP) constitute an intramembrane region (pore-forming). Over 319 to 328 (VGMPDVWLTM) the chain is Extracellular. The helical transmembrane segment at 329–349 (LSMIVGATCYAMFIGHATALI) threads the bilayer. The Cytoplasmic portion of the chain corresponds to 350–779 (QSLDSSRRQY…PRGPQISANM (430 aa)). Residues 353 to 779 (DSSRRQYQEK…PRGPQISANM (427 aa)) are interaction with KCTD3. Positions 491, 492, 494, 501, 502, 542, and 545 each coordinate 3',5'-cyclic AMP. The segment at 549–569 (KNSILQRKRSEPSPGSSGGVM) is disordered. Serine 633 is modified (phosphoserine). The span at 687-697 (SLSRTGRSQVS) shows a compositional bias: polar residues. Positions 687–779 (SLSRTGRSQV…PRGPQISANM (93 aa)) are disordered.

The protein belongs to the potassium channel HCN family. Homotetramer. The potassium channel is composed of a homo- or heterotetrameric complex of pore-forming subunits. Interacts with HCN1. Interacts with KCTD3; this interaction increases cell surface expression and current density of this channel. Interacts with PEX5L. In terms of tissue distribution, detected in hypothalamus, amygdala, olfactory bulb, hippocampus and retina (at protein level). Highly expressed in brain and heart, in particular in ventricle, atrium and in sinoatrial node (SAN). Detected at low levels in skeletal muscle and lung. Expressed in DRG neurons.

The protein localises to the cell membrane. It catalyses the reaction K(+)(in) = K(+)(out). The catalysed reaction is Na(+)(in) = Na(+)(out). Its activity is regulated as follows. Unlike HCN2 and HCN4, HCN3 is insensitive to cyclic nucleotides, such as cAMP or cGMP. This lack of sensitivity of HCN3, despite harboring a functional cyclic nucleotide-binding domain (CNBD), may be explained by its shorter C-terminal sequence, which may alter the normal autoinhibition of the channel. Inhibited by Cs(1+) and ivabradine. Phosphatidylinositol-4,5-bisphosphate (PIP(2)) shifts HCN3 activation to more depolarized potentials and accelerated activation kinetics. In terms of biological role, hyperpolarization-activated ion channel that are permeable to sodium and potassium ions, with an about 3:1 preference for potassium ions. Contributes to the native pacemaker currents in heart (If) and in neurons (Ih). In particular, plays a pivotal role in maintaining excitability and promoting rhythmic burst firing within hypothalamic nuclei. Exerts a significant influence on the configuration of the cardiac action potential waveform. Does not appear to play a prominent role in the processing of acute, neuropathic, or inflammatory pain. The chain is Potassium/sodium hyperpolarization-activated cyclic nucleotide-gated channel 3 (Hcn3) from Mus musculus (Mouse).